A 316-amino-acid polypeptide reads, in one-letter code: Deoxyribonuclease-1-like 1 (316 aa).

An N-terminal signal peptide occupies residues 1-28; that stretch reads MHSSGGFQKAIHGHALLLLLLLASGAET. Catalysis depends on residues glutamate 107 and histidine 158. The cysteines at positions 197 and 234 are disulfide-linked. N-linked (GlcNAc...) asparagine glycosylation occurs at asparagine 271.

It belongs to the DNase I family.

It localises to the endoplasmic reticulum. This chain is Deoxyribonuclease-1-like 1 (DNASE1L1), found in Bos taurus (Bovine).